Here is a 99-residue protein sequence, read N- to C-terminus: Imizoquin biosynthesis cluster protein A (99 aa).

Its pathway is secondary metabolite biosynthesis. Part of the gene cluster that mediates the biosynthesis of imizoquins A to D, tripeptide-derived alkaloids that serve a protective role against oxidative stress that are essential for normal germination. ImqB is a canonical three-module NRPS that assembles the tripeptide backbone of the imizoquins via condensation of Trp, Tyr, and Leu-derived precursors. N-methylation by imqF and phenol oxidation by imqC, followed by cyclization via the FAD-dependent oxidase imqH carry out the three-step transformation of L-tyrosine into tetrahydroisoquinoline. Importantly, this sequence requires the presence of a free amine in the tyrosine moiety, indicating that isoquinoline formation occurs prior to peptide bond formation. The imidazolidin-4-one ring of imizoquins could form following additional oxidation of the methyl-derived bridgehead carbon by imqH. Lastly, O-methylation by imqG and leucine hydroxylation by imqE complete biosynthesis of the imizoquins. The sequence is that of Imizoquin biosynthesis cluster protein A from Aspergillus flavus (strain ATCC 200026 / FGSC A1120 / IAM 13836 / NRRL 3357 / JCM 12722 / SRRC 167).